A 196-amino-acid chain; its full sequence is Shikimate kinase (196 aa).

21-26 (GTGKSR) contributes to the ATP binding site. S25 is a Mg(2+) binding site. Substrate contacts are provided by D43, R67, and G89. Position 126 (R126) interacts with ATP. R145 is a binding site for substrate. R161 is an ATP binding site.

Belongs to the shikimate kinase family. Monomer. The cofactor is Mg(2+).

The protein resides in the cytoplasm. It catalyses the reaction shikimate + ATP = 3-phosphoshikimate + ADP + H(+). It functions in the pathway metabolic intermediate biosynthesis; chorismate biosynthesis; chorismate from D-erythrose 4-phosphate and phosphoenolpyruvate: step 5/7. In terms of biological role, catalyzes the specific phosphorylation of the 3-hydroxyl group of shikimic acid using ATP as a cosubstrate. This is Shikimate kinase from Deinococcus radiodurans (strain ATCC 13939 / DSM 20539 / JCM 16871 / CCUG 27074 / LMG 4051 / NBRC 15346 / NCIMB 9279 / VKM B-1422 / R1).